Consider the following 339-residue polypeptide: Dihydroorotate dehydrogenase (quinone) (339 aa).

Residues 62-66 (AGMDK) and threonine 86 each bind FMN. A substrate-binding site is contributed by lysine 66. 111–115 (NRMGF) is a binding site for substrate. FMN contacts are provided by asparagine 139 and asparagine 172. Asparagine 172 contributes to the substrate binding site. The Nucleophile role is filled by serine 175. Asparagine 177 serves as a coordination point for substrate. 2 residues coordinate FMN: lysine 217 and threonine 245. A substrate-binding site is contributed by 246-247 (NT). Residues glycine 268, glycine 297, and 318–319 (YS) contribute to the FMN site.

It belongs to the dihydroorotate dehydrogenase family. Type 2 subfamily. As to quaternary structure, monomer. It depends on FMN as a cofactor.

It is found in the cell membrane. It carries out the reaction (S)-dihydroorotate + a quinone = orotate + a quinol. Its pathway is pyrimidine metabolism; UMP biosynthesis via de novo pathway; orotate from (S)-dihydroorotate (quinone route): step 1/1. Catalyzes the conversion of dihydroorotate to orotate with quinone as electron acceptor. The chain is Dihydroorotate dehydrogenase (quinone) from Shewanella oneidensis (strain ATCC 700550 / JCM 31522 / CIP 106686 / LMG 19005 / NCIMB 14063 / MR-1).